Here is a 486-residue protein sequence, read N- to C-terminus: Palmitoyltransferase pfa4 (486 aa).

Residues 1–15 (MTNLQTGPTTRGLQR) lie on the Cytoplasmic side of the membrane. The helical transmembrane segment at 16–36 (FAIPAVCGLIIFLGYYSQYLF) threads the bilayer. The Lumenal segment spans residues 37–51 (NTSADLAPGPLTCRE). A helical membrane pass occupies residues 52–72 (SLIFNILLVCLWLTYYQACTV). Residues 73 to 146 (DPGQYKFPPK…NCVSLQTFPH (74 aa)) lie on the Cytoplasmic side of the membrane. Over residues 81-91 (PKEKEDGDNNN) the composition is skewed to basic and acidic residues. Residues 81 to 101 (PKEKEDGDNNNKRGGRGPQKA) form a disordered region. In terms of domain architecture, DHHC spans 102 to 152 (KWCKKCDAPKPPRAHHCRHCARCIPRMDHHCPWTGNCVSLQTFPHFLRFLV). The active-site S-palmitoyl cysteine intermediate is the Cys-132. A helical membrane pass occupies residues 147–166 (FLRFLVYTNAALVYFARLLW). Residues 167-178 (TRLYYGLWDQRH) are Lumenal-facing. The chain crosses the membrane as a helical span at residues 179–201 (VPAYLGPSVGALLGCTMLSIAWF). Residues 202–486 (ATQFALMVLL…RKVKSNGVHE (285 aa)) are Cytoplasmic-facing. Residues 314 to 420 (NDRVGMWPPP…QDGRAWMNSE (107 aa)) form a disordered region. Basic and acidic residues-rich tracts occupy residues 324–333 (DPEKLRRERA) and 346–376 (LNTE…DLRR). Residues 386 to 399 (EEDEIMAELEEDEG) show a composition bias toward acidic residues.

It belongs to the DHHC palmitoyltransferase family. PFA4 subfamily.

It localises to the endoplasmic reticulum membrane. It carries out the reaction L-cysteinyl-[protein] + hexadecanoyl-CoA = S-hexadecanoyl-L-cysteinyl-[protein] + CoA. In terms of biological role, mediates the reversible addition of palmitate to target proteins, thereby regulating their membrane association and biological function. This Neurospora crassa (strain ATCC 24698 / 74-OR23-1A / CBS 708.71 / DSM 1257 / FGSC 987) protein is Palmitoyltransferase pfa4.